Consider the following 292-residue polypeptide: Acetylglutamate kinase (292 aa).

Substrate contacts are provided by residues 72 to 73 (GG), R94, and N187.

This sequence belongs to the acetylglutamate kinase family. ArgB subfamily.

Its subcellular location is the cytoplasm. It carries out the reaction N-acetyl-L-glutamate + ATP = N-acetyl-L-glutamyl 5-phosphate + ADP. Its pathway is amino-acid biosynthesis; L-arginine biosynthesis; N(2)-acetyl-L-ornithine from L-glutamate: step 2/4. Functionally, catalyzes the ATP-dependent phosphorylation of N-acetyl-L-glutamate. The sequence is that of Acetylglutamate kinase from Trichodesmium erythraeum (strain IMS101).